We begin with the raw amino-acid sequence, 939 residues long: Translation initiation factor IF-2 (939 aa).

A disordered region spans residues Arg57–Ile274. Basic and acidic residues-rich tracts occupy residues Met83–Val122 and Leu129–Leu138. 2 stretches are compositionally biased toward polar residues: residues Glu146 to Leu158 and Val170 to Ala180. Residues Lys208–Thr227 show a composition bias toward basic and acidic residues. A compositionally biased stretch (basic residues) spans Ala252–Pro262. The tr-type G domain occupies Glu438 to Lys607. Residues Gly447–Thr454 form a G1 region. Gly447–Thr454 is a GTP binding site. The interval Gly472–His476 is G2. Residues Asp493 to Gly496 are G3. GTP contacts are provided by residues Asp493–His497 and Asn547–Asp550. Positions Asn547–Asp550 are G4. The tract at residues Ser583–Lys585 is G5.

This sequence belongs to the TRAFAC class translation factor GTPase superfamily. Classic translation factor GTPase family. IF-2 subfamily.

It is found in the cytoplasm. Functionally, one of the essential components for the initiation of protein synthesis. Protects formylmethionyl-tRNA from spontaneous hydrolysis and promotes its binding to the 30S ribosomal subunits. Also involved in the hydrolysis of GTP during the formation of the 70S ribosomal complex. The protein is Translation initiation factor IF-2 of Wolinella succinogenes (strain ATCC 29543 / DSM 1740 / CCUG 13145 / JCM 31913 / LMG 7466 / NCTC 11488 / FDC 602W) (Vibrio succinogenes).